Consider the following 235-residue polypeptide: uncharacterized protein (235 aa).

Disordered stretches follow at residues 60-96 (SSNR…QKKT) and 192-235 (LNTS…YDSF). Polar residues predominate over residues 80 to 93 (SFQNMNSSMPSSTQ). The segment covering 197–214 (SEDDTESIVETDYSEEEK) has biased composition (acidic residues).

Belongs to the asfivirus DP238L family.

This is an uncharacterized protein from Ornithodoros (relapsing fever ticks).